Here is a 178-residue protein sequence, read N- to C-terminus: Large ribosomal subunit protein uL6 (178 aa).

Belongs to the universal ribosomal protein uL6 family. In terms of assembly, part of the 50S ribosomal subunit.

Functionally, this protein binds to the 23S rRNA, and is important in its secondary structure. It is located near the subunit interface in the base of the L7/L12 stalk, and near the tRNA binding site of the peptidyltransferase center. The sequence is that of Large ribosomal subunit protein uL6 from Streptococcus pneumoniae (strain ATCC 700669 / Spain 23F-1).